A 117-amino-acid chain; its full sequence is Large ribosomal subunit protein bL17 (117 aa).

Belongs to the bacterial ribosomal protein bL17 family. As to quaternary structure, part of the 50S ribosomal subunit. Contacts protein L32.

In Dehalococcoides mccartyi (strain ATCC BAA-2100 / JCM 16839 / KCTC 5957 / BAV1), this protein is Large ribosomal subunit protein bL17.